We begin with the raw amino-acid sequence, 193 residues long: NADH-quinone oxidoreductase subunit B (193 aa).

Residues C72, C73, C137, and C167 each contribute to the [4Fe-4S] cluster site.

Belongs to the complex I 20 kDa subunit family. As to quaternary structure, NDH-1 is composed of 14 different subunits. Subunits NuoB, C, D, E, F, and G constitute the peripheral sector of the complex. [4Fe-4S] cluster is required as a cofactor.

Its subcellular location is the cell inner membrane. It catalyses the reaction a quinone + NADH + 5 H(+)(in) = a quinol + NAD(+) + 4 H(+)(out). Its function is as follows. NDH-1 shuttles electrons from NADH, via FMN and iron-sulfur (Fe-S) centers, to quinones in the respiratory chain. The immediate electron acceptor for the enzyme in this species is believed to be ubiquinone. Couples the redox reaction to proton translocation (for every two electrons transferred, four hydrogen ions are translocated across the cytoplasmic membrane), and thus conserves the redox energy in a proton gradient. This is NADH-quinone oxidoreductase subunit B from Bartonella quintana (strain Toulouse) (Rochalimaea quintana).